A 467-amino-acid polypeptide reads, in one-letter code: Mothers against decapentaplegic homolog 2 (467 aa).

N-acetylserine is present on S2. Residue T8 is modified to Phosphothreonine. In terms of domain architecture, MH1 spans 10 to 176 (PVVKRLLGWK…YQRVETPVLP (167 aa)). K19 bears the N6-acetyllysine mark. Zn(2+)-binding residues include C74, C149, C161, and H166. Residues 207 to 217 (PAGIEPQSNYI) are compositionally biased toward polar residues. The interval 207-251 (PAGIEPQSNYIPETPPPGYISEDGETSDQQLNQSMDTGSPAELSP) is disordered. Position 220 is a phosphothreonine (T220). The PY-motif signature appears at 221–225 (PPPGY). Residues 233-243 (SDQQLNQSMDT) show a composition bias toward polar residues. A Phosphoserine; by CAMK2 modification is found at S240. Phosphoserine occurs at positions 245, 250, 255, 458, 460, and 464. The MH2 domain maps to 274-467 (WCSIAYYELN…SPSVRCSSMS (194 aa)). A phosphoserine; by TGFBR1 mark is found at S465 and S467.

This sequence belongs to the dwarfin/SMAD family. In terms of assembly, monomer; in the absence of TGF-beta. Heterodimer; in the presence of TGF-beta. Forms a heterodimer with co-SMAD, SMAD4, in the nucleus to form the transactivation complex SMAD2/SMAD4. Found in a complex with SMAD3 and TRIM33 upon addition of TGF-beta. Identified in a complex that contains at least ZNF451, SMAD2, SMAD3 and SMAD4. Interacts (via the MH2 domain) with ZFYVE9; may form trimers with the SMAD4 co-SMAD. Interacts with TAZ/WWRT1. Interacts with FOXH1. Interacts with SNW1. Interacts with CREB-binding protein (CBP) and EP300. Interacts with SNON. Interacts with ALK4/ACVR1B. Interacts with SKOR1. Interacts with SKOR2. Interacts with PRDM16. Interacts (via MH2 domain) with LEMD3. Interacts with RBPMS. Interacts with WWP1. Interacts (dephosphorylated form, via the MH1 and MH2 domains) with RANBP3 (via its C-terminal R domain); the interaction results in the export of dephosphorylated SMAD3 out of the nucleus and termination of the TGF-beta signaling. Interacts with PDPK1 (via PH domain). Interacts with DAB2; the interactions are enhanced upon TGF-beta stimulation. Interacts with USP15. Interacts with PPP5C. Interacts with LDLRAD4 (via the SMAD interaction motif). Interacts (via MH2 domain) with PMEPA1 (via the SMAD interaction motif). Interacts with ZFHX3. Interacts with ZNF451. Interacts with SMURF2 when phosphorylated on Ser-465/467. Interacts with PPM1A. Interacts with TGF-beta. Interacts with TGFBR1. Interacts with TGIF. Interacts with SMAD3 and TRIM33. Interacts with ZNF580. Interacts with NEDD4L in response to TGF-beta. Interacts with HGS. Interacts with AIP1. Interacts with WWP1. Interacts with PML. Interacts weakly with ZNF8. Interacts (when phosphorylated) with RNF111; RNF111 acts as an enhancer of the transcriptional responses by mediating ubiquitination and degradation of SMAD2 inhibitors. Interacts with YAP1 (when phosphorylated at 'Ser-55'). Interacts when phosphorylated with IPO7; the interaction facilitates translocation of SMAD2 to the nucleus. Interacts with MTMR4; negatively regulates TGF-beta signaling through SMAD2 dephosphorylation and retention in endosomes. Post-translationally, in response to TGF-beta, phosphorylated on the C-terminal SXS motif by TGF-beta and activin type 1 receptor kinases, phosphorylation declines progressively in a KMT5A-dependent manner. Phosphorylation in this motif is required for interaction with a number of proteins including SMURF2, SNON and SMAD4 in response to TGF-beta. Dephosphorylated in this motif by PPM1A leading to disruption of the SMAD2/3-SMAD4 complex, nuclear export and termination of the TGF-beta signaling. In response to decorin, the naturally occurring inhibitor of TGF-beta signaling, phosphorylated on Ser-240 by CaMK2. Phosphorylated by MAPK3 upon EGF stimulation; which increases transcriptional activity and stability, and is blocked by calmodulin. Phosphorylated by PDPK1. In terms of processing, acetylated on Lys-19 by coactivators in response to TGF-beta signaling, which increases transcriptional activity. In response to TGF-beta, ubiquitinated by NEDD4L; which promotes its degradation. Monoubiquitinated, leading to prevent DNA-binding. Deubiquitination by USP15 alleviates inhibition and promotes activation of TGF-beta target genes. Ubiquitinated by RNF111, leading to its degradation: only SMAD2 proteins that are 'in use' are targeted by RNF111, RNF111 playing a key role in activating SMAD2 and regulating its turnover.

Its subcellular location is the cytoplasm. The protein localises to the nucleus. Receptor-regulated SMAD (R-SMAD) that is an intracellular signal transducer and transcriptional modulator activated by TGF-beta (transforming growth factor) and activin type 1 receptor kinases. Binds the TRE element in the promoter region of many genes that are regulated by TGF-beta and, on formation of the SMAD2/SMAD4 complex, activates transcription. Promotes TGFB1-mediated transcription of odontoblastic differentiation genes in dental papilla cells. Positively regulates PDPK1 kinase activity by stimulating its dissociation from the 14-3-3 protein YWHAQ which acts as a negative regulator. The polypeptide is Mothers against decapentaplegic homolog 2 (SMAD2) (Pongo abelii (Sumatran orangutan)).